The chain runs to 254 residues: MIMSSKEVEIIWHQIISEVEILMDQEPELAGFYHAYILQHDSFDMALSYILSNQLSNKVMSTVFVRDIINKVYIACRKIVAYAIQDIKALFNHGLVHCYSFSLLHSKGFHALQAYRISNFLWCEEKKSLALYFQNRISCLFSVDIHPASMIGSGIVLDNAIGITIGQTSAIKDSVSVLSQSLALLGSAFKISSVQCPKINEGVIIGANVAILGNVVIGEKTKIQACTVVLQSVPPNSIVTSVLAKIVSFKNINE.

The protein belongs to the transferase hexapeptide repeat family.

It localises to the cytoplasm. The enzyme catalyses L-serine + acetyl-CoA = O-acetyl-L-serine + CoA. It functions in the pathway amino-acid biosynthesis; L-cysteine biosynthesis; L-cysteine from L-serine: step 1/2. This chain is Serine acetyltransferase (cysE), found in Buchnera aphidicola subsp. Baizongia pistaciae (strain Bp).